Here is a 231-residue protein sequence, read N- to C-terminus: tRNA (guanine-N(1)-)-methyltransferase (231 aa).

S-adenosyl-L-methionine-binding positions include Gly112 and 132 to 137 (LGDFVL).

It belongs to the RNA methyltransferase TrmD family. Homodimer.

It localises to the cytoplasm. The catalysed reaction is guanosine(37) in tRNA + S-adenosyl-L-methionine = N(1)-methylguanosine(37) in tRNA + S-adenosyl-L-homocysteine + H(+). In terms of biological role, specifically methylates guanosine-37 in various tRNAs. This chain is tRNA (guanine-N(1)-)-methyltransferase, found in Microcystis aeruginosa (strain NIES-843 / IAM M-2473).